The primary structure comprises 123 residues: Non-specific lipid-transfer protein 3 (123 aa).

The N-terminal stretch at 1–25 (MASSGQLLKLVCLVAVMCCMAVGGP) is a signal peptide. Intrachain disulfides connect cysteine 33–cysteine 80, cysteine 43–cysteine 57, cysteine 58–cysteine 105, and cysteine 78–cysteine 119.

The protein belongs to the plant LTP family.

Plant non-specific lipid-transfer proteins transfer phospholipids as well as galactolipids across membranes. May play a role in wax or cutin deposition in the cell walls of expanding epidermal cells and certain secretory tissues. This Prunus dulcis (Almond) protein is Non-specific lipid-transfer protein 3.